The following is a 451-amino-acid chain: uncharacterized protein (451 aa).

Positions 2–60 (NLKVKQKIPLKIKRMGINGEGIGFYQKTLVFVPGALKGEDIYCQITSIRRNFVEAKLLK) constitute a TRAM domain. [4Fe-4S] cluster-binding residues include C73, C79, C82, and C162. The S-adenosyl-L-methionine site is built by Q283, Y312, D333, and D381. The active-site Nucleophile is C408.

It belongs to the class I-like SAM-binding methyltransferase superfamily. RNA M5U methyltransferase family.

This is an uncharacterized protein from Streptococcus pneumoniae serotype 4 (strain ATCC BAA-334 / TIGR4).